The primary structure comprises 310 residues: L-lactate dehydrogenase (310 aa).

Residues valine 17, aspartate 38, lysine 43, tyrosine 69, and 83–84 (GA) contribute to the NAD(+) site. Substrate-binding residues include glutamine 86 and arginine 92. Residues serine 105, 122–124 (ATN), and serine 147 contribute to the NAD(+) site. A substrate-binding site is contributed by 124–127 (NPVD). 152–155 (DTAR) contacts substrate. Residues arginine 157 and histidine 172 each coordinate beta-D-fructose 1,6-bisphosphate. Histidine 179 acts as the Proton acceptor in catalysis. At tyrosine 218 the chain carries Phosphotyrosine. Residue threonine 227 coordinates substrate.

The protein belongs to the LDH/MDH superfamily. LDH family. In terms of assembly, homotetramer.

The protein localises to the cytoplasm. It catalyses the reaction (S)-lactate + NAD(+) = pyruvate + NADH + H(+). It functions in the pathway fermentation; pyruvate fermentation to lactate; (S)-lactate from pyruvate: step 1/1. With respect to regulation, allosterically activated by fructose 1,6-bisphosphate (FBP). Functionally, catalyzes the conversion of lactate to pyruvate. This Halalkalibacterium halodurans (strain ATCC BAA-125 / DSM 18197 / FERM 7344 / JCM 9153 / C-125) (Bacillus halodurans) protein is L-lactate dehydrogenase.